We begin with the raw amino-acid sequence, 160 residues long: Transcription antitermination protein NusB (160 aa).

The protein belongs to the NusB family.

In terms of biological role, involved in transcription antitermination. Required for transcription of ribosomal RNA (rRNA) genes. Binds specifically to the boxA antiterminator sequence of the ribosomal RNA (rrn) operons. The sequence is that of Transcription antitermination protein NusB from Sinorhizobium fredii (strain NBRC 101917 / NGR234).